The following is a 404-amino-acid chain: Ubiquitin-like modifier-activating enzyme 5 (404 aa).

At Ser-45 the chain carries Phosphoserine. ATP contacts are provided by Gly-83, Asp-104, Lys-127, Asn-150, and Asn-184. Residues Cys-226 and Cys-229 each coordinate Zn(2+). The Glycyl thioester intermediate role is filled by Cys-250. Residues Cys-303 and Cys-308 each contribute to the Zn(2+) site. A UFM1-interacting sequence (UIS) motif is present at residues 334 to 346 (IIHEDNEWGIELV). Residues 347–377 (SEVSEEELKNSSGPVPDLPEGITVAYTIPKK) are linker. Phosphoserine occurs at positions 358 and 393. Positions 389-404 (DSGESLEDLMAKMKNM) match the UFC1-binding sequence (UFC) motif.

This sequence belongs to the ubiquitin-activating E1 family. UBA5 subfamily. As to quaternary structure, homodimer; homodimerization is required for UFM1 activation. Interacts (via UIS motif) with UFM1; binds UFM1 via a trans-binding mechanism in which UFM1 interacts with distinct sites in both subunits of the UBA5 homodimer. Interacts (via C-terminus) with UFC1. Interacts (via UIS motif) with GABARAPL2 and, with lower affinity, with GABARAP and GABARAPL1.

The protein resides in the cytoplasm. It localises to the nucleus. The protein localises to the endoplasmic reticulum membrane. Its subcellular location is the golgi apparatus. E1-like enzyme which specifically catalyzes the first step in ufmylation. Activates UFM1 by first adenylating its C-terminal glycine residue with ATP, and thereafter linking this residue to the side chain of a cysteine residue in E1, yielding a UFM1-E1 thioester and free AMP. Activates UFM1 via a trans-binding mechanism, in which UFM1 interacts with distinct sites in both subunits of the UBA5 homodimer. Trans-binding also promotes stabilization of the UBA5 homodimer, and enhances ATP-binding. Transfer of UFM1 from UBA5 to the E2-like enzyme UFC1 also takes place using a trans mechanism. Ufmylation plays a key role in various processes, such as ribosome recycling, response to DNA damage, interferon response or reticulophagy (also called ER-phagy). Ufmylation is essential for erythroid differentiation of both megakaryocytes and erythrocytes. The chain is Ubiquitin-like modifier-activating enzyme 5 from Pongo abelii (Sumatran orangutan).